A 20-amino-acid polypeptide reads, in one-letter code: Agglutinin beta-3 chain (20 aa).

The segment at 1 to 20 is disordered; that stretch reads GPNGKSQSIIVGPWGDRVTN.

Belongs to the jacalin lectin family. As to quaternary structure, formed of four alpha chains and four beta chains.

Functionally, D-galactose-specific lectin, binds the T-antigen structure Gal-beta1,3-GalNAc. The protein is Agglutinin beta-3 chain of Maclura pomifera (Osage orange).